A 156-amino-acid chain; its full sequence is Cell division protein SepF (156 aa).

Residues 17–44 form a disordered region; sequence PETADYYEDQQPAQQAPAPVPTPAPTRS.

This sequence belongs to the SepF family. Homodimer. Interacts with FtsZ.

The protein resides in the cytoplasm. Its function is as follows. Cell division protein that is part of the divisome complex and is recruited early to the Z-ring. Probably stimulates Z-ring formation, perhaps through the cross-linking of FtsZ protofilaments. Its function overlaps with FtsA. This chain is Cell division protein SepF, found in Limosilactobacillus fermentum (strain NBRC 3956 / LMG 18251) (Lactobacillus fermentum).